The following is a 420-amino-acid chain: Glutamyl-tRNA reductase (420 aa).

Substrate is bound by residues 49–52, Ser-109, 114–116, and Gln-120; these read TCNR and EPQ. The Nucleophile role is filled by Cys-50. NADP(+) is bound at residue 189–194; it reads GAGETI.

The protein belongs to the glutamyl-tRNA reductase family. Homodimer.

It carries out the reaction (S)-4-amino-5-oxopentanoate + tRNA(Glu) + NADP(+) = L-glutamyl-tRNA(Glu) + NADPH + H(+). The protein operates within porphyrin-containing compound metabolism; protoporphyrin-IX biosynthesis; 5-aminolevulinate from L-glutamyl-tRNA(Glu): step 1/2. In terms of biological role, catalyzes the NADPH-dependent reduction of glutamyl-tRNA(Glu) to glutamate 1-semialdehyde (GSA). This chain is Glutamyl-tRNA reductase, found in Yersinia pseudotuberculosis serotype O:1b (strain IP 31758).